We begin with the raw amino-acid sequence, 2359 residues long: Nonribosomal peptide synthetase anaPS (2359 aa).

The adenylation 1 stretch occupies residues 239 to 633 (RNATVHGDTL…VRRKDNQVKI (395 aa)). A Carrier 1 domain is found at 770 to 846 (AAQGKGEEAI…ELASAANLSN (77 aa)). Residue Ser-807 is modified to O-(pantetheine 4'-phosphoryl)serine. A condensation 1 region spans residues 883-1292 (EDIYPSTALQ…VGDLPRMSRQ (410 aa)). An adenylation 2 region spans residues 1321–1709 (LEYPNACAVS…GRKDSQIKIR (389 aa)). The region spanning 1842–1918 (APSNSVEQDL…AIANKIGVVS (77 aa)) is the Carrier 2 domain. The residue at position 1879 (Ser-1879) is an O-(pantetheine 4'-phosphoryl)serine. The segment at 1936–2356 (LTPIQEFFFE…LVKCLEDLAS (421 aa)) is condensation 2.

Belongs to the NRP synthetase family.

The catalysed reaction is anthranilate + L-tryptophan + 2 ATP = (R)-benzodiazepinedione + 2 AMP + 2 diphosphate + H(+). It participates in alkaloid biosynthesis. In terms of biological role, nonribosomal peptide synthetase; part of the gene cluster that mediates the biosynthesis of the prenylated pyrroloindoline diketopiperazine acetylaszonalenin. The first step in the pathway is the formation of (R)-benzodiazepinedione by condensation of tryptophan and anthranilic acid catalyzed by the non-ribosomal peptide synthetase anaPS. The prenyltransferase anaPT then converts (R)-benzodiazepinedione to aszonalenin in the presence of dimethylallyl diphosphate (DMAPP) via C3-prenylation. The last step in the biosynthesis of acetylaszonalenin via acetylation of aszonalenin at position N1 catalyzed by anaAT. This chain is Nonribosomal peptide synthetase anaPS, found in Neosartorya fischeri (strain ATCC 1020 / DSM 3700 / CBS 544.65 / FGSC A1164 / JCM 1740 / NRRL 181 / WB 181) (Aspergillus fischerianus).